The chain runs to 481 residues: Proline--tRNA ligase (481 aa).

Belongs to the class-II aminoacyl-tRNA synthetase family. ProS type 3 subfamily. Homodimer.

It localises to the cytoplasm. It carries out the reaction tRNA(Pro) + L-proline + ATP = L-prolyl-tRNA(Pro) + AMP + diphosphate. Functionally, catalyzes the attachment of proline to tRNA(Pro) in a two-step reaction: proline is first activated by ATP to form Pro-AMP and then transferred to the acceptor end of tRNA(Pro). This Chlorobium phaeovibrioides (strain DSM 265 / 1930) (Prosthecochloris vibrioformis (strain DSM 265)) protein is Proline--tRNA ligase.